Consider the following 1048-residue polypeptide: [F-actin]-monooxygenase MICAL1 (1048 aa).

Positions 1–489 (MASPASTNPA…QDLYDMMDKE (489 aa)) are monooxygenase domain. Residues Cys-95, 114–116 (EKR), 121–123 (RHN), Phe-181, Tyr-293, and Asp-393 contribute to the FAD site. Thr-475 is modified (phosphothreonine). The span at 488–502 (KEHAQRKSDEPDSRK) shows a compositional bias: basic and acidic residues. A disordered region spans residues 488-508 (KEHAQRKSDEPDSRKTTTGSA). The 105-residue stretch at 507–611 (SAGTEELLHW…YLSHFHSAFK (105 aa)) folds into the Calponin-homology (CH) domain. Phosphoserine is present on Ser-616. Positions 643–676 (TRAKVDEETPSTEEPPVSEPSMSPNTPELSEHQE) are disordered. The segment covering 654–666 (TEEPPVSEPSMSP) has biased composition (low complexity). An LIM zinc-binding domain is found at 681-743 (ELCELCGKHL…LQHLPQEDQK (63 aa)). Zn(2+) contacts are provided by Cys-683, Cys-686, His-704, Cys-707, Cys-710, Cys-713, Cys-733, and His-736. Disordered regions lie at residues 741-787 (DQKE…QPAR), 805-825 (IIPD…SDLA), and 839-873 (PVQA…PPLE). Residues 747 to 765 (NNGSLESQELPTPGDSNMQ) are compositionally biased toward polar residues. The span at 772–787 (PVTRVSPVPSPSQPAR) shows a compositional bias: low complexity. Phosphoserine occurs at positions 777 and 781. Coiled coils occupy residues 847–867 (EAIE…EEEE), 906–949 (EEEM…ESSS), and 974–1031 (EEAE…VNQR). Residues 852-868 (GDDEEEEEEEEEEEEEP) show a composition bias toward acidic residues. Positions 905–1048 (KEEEMKRFCK…EERRLREMPA (144 aa)) constitute a bMERB domain.

Belongs to the Mical family. In terms of assembly, associates with the SH3 domain of NEDD9. Interacts with VIM and PLXNA3. Interacts with RAB1B, RAB8A, RAB10, RAB13 and RAB15 (in their GTP-bound forms); binding to RAB1B is of low affinity compared to other Rab proteins; at least in case of RAB8A and RAB10 can bind 2 molecules of the Rab proteins simultaneously. Interacts with STK38 and STK38L. Interacts with GRAF1/ARHGAP26, GRAF2/ARHGAP10, RAB8A, RAB8B and RAB10; may bind simultaneously to GRAFs and Rabs and connects GRAFs to Rabs. Does not interact with RAB1 and RAB11A. It depends on FAD as a cofactor. As to expression, expressed in the postnatal and adult hippocampus; found in dentate gyrus, the polymorphic layer, cornu ammonis (CA) 1-3 and in mossy fibers of the striatum lucidum. In adult hippocampus strongly expressed in CA3 pyramidial neurons.

Its subcellular location is the cytoplasm. The protein localises to the cytoskeleton. It is found in the endosome membrane. The protein resides in the midbody. The catalysed reaction is L-methionyl-[F-actin] + NADPH + O2 + H(+) = L-methionyl-(R)-S-oxide-[F-actin] + NADP(+) + H2O. It carries out the reaction NADPH + O2 + H(+) = H2O2 + NADP(+). Monooxygenase that promotes depolymerization of F-actin by mediating oxidation of specific methionine residues on actin to form methionine-sulfoxide, resulting in actin filament disassembly and preventing repolymerization. In the absence of actin, it also functions as a NADPH oxidase producing H(2)O(2). Acts as a cytoskeletal regulator that connects NEDD9 to intermediate filaments. Also acts as a negative regulator of apoptosis via its interaction with STK38 and STK38L; acts by antagonizing STK38 and STK38L activation by MST1/STK4. Involved in regulation of lamina-specific connectivity in the nervous system such as the development of lamina-restricted hippocampal connections. Through redox regulation of the actin cytoskeleton controls the intracellular distribution of secretory vesicles containing L1/neurofascin/NgCAM family proteins in neurons, thereby regulating their cell surface levels. May act as Rab effector protein and play a role in vesicle trafficking. Promotes endosomal tubule extension by associating with RAB8 (RAB8A or RAB8B), RAB10 and GRAF (GRAF1/ARHGAP26 or GRAF2/ARHGAP10) on the endosomal membrane which may connect GRAFs to Rabs, thereby participating in neosynthesized Rab8-Rab10-Rab11-dependent protein export. This is [F-actin]-monooxygenase MICAL1 (Mical1) from Mus musculus (Mouse).